A 318-amino-acid chain; its full sequence is NADH-ubiquinone oxidoreductase chain 1 (318 aa).

Helical transmembrane passes span 2 to 22, 37 to 57, 69 to 89, 100 to 120, 136 to 156, 171 to 191, 231 to 251, 253 to 273, and 293 to 313; these read FLMN…FLTL, PNIV…KLFI, LMFT…WIPM, LGVL…LWSG, VAQT…VMMM, HMWL…STLA, IIMM…NPLF, ELFT…FLWV, and FLPL…LSAG.

It belongs to the complex I subunit 1 family. As to quaternary structure, core subunit of respiratory chain NADH dehydrogenase (Complex I) which is composed of 45 different subunits.

The protein localises to the mitochondrion inner membrane. It carries out the reaction a ubiquinone + NADH + 5 H(+)(in) = a ubiquinol + NAD(+) + 4 H(+)(out). Functionally, core subunit of the mitochondrial membrane respiratory chain NADH dehydrogenase (Complex I) which catalyzes electron transfer from NADH through the respiratory chain, using ubiquinone as an electron acceptor. Essential for the catalytic activity and assembly of complex I. The protein is NADH-ubiquinone oxidoreductase chain 1 (MT-ND1) of Zaedyus pichiy (Pichi).